The chain runs to 421 residues: Ethanolamine-phosphate cytidylyltransferase (421 aa).

The helical transmembrane segment at Ile-8–Leu-28 threads the bilayer. Residues Ser-203 to Ala-227 form a disordered region. Residues Arg-204–His-215 are compositionally biased toward polar residues. CTP-binding positions include Ala-262–Phe-263, His-270–Ile-273, Arg-298, His-346–Val-349, and Ser-377–Ile-381. Residues Ala-402–Asp-421 are disordered. Residues Lys-403–Glu-413 are compositionally biased toward basic and acidic residues. Position 416 is a phosphoserine (Ser-416).

This sequence belongs to the cytidylyltransferase family. Expressed in root tip, lateral root primordia, leaves, shoot apex, stem vascular bundles, pollen and embryos.

It is found in the mitochondrion outer membrane. The enzyme catalyses phosphoethanolamine + CTP + H(+) = CDP-ethanolamine + diphosphate. The protein operates within phospholipid metabolism; phosphatidylethanolamine biosynthesis; phosphatidylethanolamine from ethanolamine: step 2/3. Functionally, plays an important role in the biosynthesis of the phospholipid phosphatidylethanolamine. Catalyzes the formation of CDP-ethanolamine. Essential for early embryonic development. The polypeptide is Ethanolamine-phosphate cytidylyltransferase (Arabidopsis thaliana (Mouse-ear cress)).